The primary structure comprises 339 residues: UDP-N-acetylglucosamine--N-acetylmuramyl-(pentapeptide) pyrophosphoryl-undecaprenol N-acetylglucosamine transferase (339 aa).

UDP-N-acetyl-alpha-D-glucosamine-binding positions include 9–11 (TGG), Asn-119, Arg-160, Ser-188, and Gln-280.

Belongs to the glycosyltransferase 28 family. MurG subfamily.

The protein resides in the cell inner membrane. It catalyses the reaction di-trans,octa-cis-undecaprenyl diphospho-N-acetyl-alpha-D-muramoyl-L-alanyl-D-glutamyl-meso-2,6-diaminopimeloyl-D-alanyl-D-alanine + UDP-N-acetyl-alpha-D-glucosamine = di-trans,octa-cis-undecaprenyl diphospho-[N-acetyl-alpha-D-glucosaminyl-(1-&gt;4)]-N-acetyl-alpha-D-muramoyl-L-alanyl-D-glutamyl-meso-2,6-diaminopimeloyl-D-alanyl-D-alanine + UDP + H(+). Its pathway is cell wall biogenesis; peptidoglycan biosynthesis. Its function is as follows. Cell wall formation. Catalyzes the transfer of a GlcNAc subunit on undecaprenyl-pyrophosphoryl-MurNAc-pentapeptide (lipid intermediate I) to form undecaprenyl-pyrophosphoryl-MurNAc-(pentapeptide)GlcNAc (lipid intermediate II). In Thermus thermophilus (strain ATCC BAA-163 / DSM 7039 / HB27), this protein is UDP-N-acetylglucosamine--N-acetylmuramyl-(pentapeptide) pyrophosphoryl-undecaprenol N-acetylglucosamine transferase.